Here is a 367-residue protein sequence, read N- to C-terminus: Heparan sulfate glucosamine 3-O-sulfotransferase 2 (367 aa).

Topologically, residues 1 to 19 are cytoplasmic; it reads MAYRVLGRAGPPQPRRARR. A helical; Signal-anchor for type II membrane protein membrane pass occupies residues 20–39; that stretch reads LLFAFTLSLSCTYLCYSFLC. Residues 40-367 are Lumenal-facing; sequence CCDDLGRSRL…ETVGQDFRWE (328 aa). Positions 61 to 110 are disordered; that stretch reads AGGQKLLQKSRPCDPSGPTPSEPSAPSAPAAAVPAPRLSGSNHSGSPKLG. Low complexity predominate over residues 84–96; it reads SAPSAPAAAVPAP. N-linked (GlcNAc...) asparagine glycosylation occurs at N102. 124–128 is a 3'-phosphoadenylyl sulfate binding site; the sequence is KGGTR. Residues 146–152 and 177–180 each bind substrate; these read EPHFFDR and KTPS. N193 carries an N-linked (GlcNAc...) asparagine glycan. 3'-phosphoadenylyl sulfate contacts are provided by R205 and S213. N-linked (GlcNAc...) asparagine glycosylation is present at N235. Position 245–246 (245–246) interacts with substrate; the sequence is WN. Residue N306 is glycosylated (N-linked (GlcNAc...) asparagine). The cysteines at positions 313 and 325 are disulfide-linked. 3'-phosphoadenylyl sulfate is bound at residue 330 to 334; it reads KGRTH.

The protein belongs to the sulfotransferase 1 family. In terms of tissue distribution, highly expressed in the brain and weakly expressed in the heart, placenta, lung and skeletal muscle.

It localises to the golgi apparatus membrane. The catalysed reaction is alpha-D-glucosaminyl-[heparan sulfate](n) + 3'-phosphoadenylyl sulfate = 3-sulfo-alpha-D-glucosaminyl-[heparan sulfate](n) + adenosine 3',5'-bisphosphate + H(+). Its function is as follows. Sulfotransferase that utilizes 3'-phospho-5'-adenylyl sulfate (PAPS) to catalyze the transfer of a sulfo group to an N-unsubstituted glucosamine linked to a 2-O-sulfo iduronic acid unit on heparan sulfate. Catalyzes the O-sulfation of glucosamine in GlcA2S-GlcNS. Unlike HS3ST1/3-OST-1, does not convert non-anticoagulant heparan sulfate to anticoagulant heparan sulfate. This Homo sapiens (Human) protein is Heparan sulfate glucosamine 3-O-sulfotransferase 2 (HS3ST2).